The following is a 245-amino-acid chain: MNASATVAGVDLPDGQPARVLHARPEPLRMKPGETALVVVDMQNAYASLGGYLDLAGFDVSSTGPVIVNINKACAAARAAGIPVIFFQNGWDPAYVEAGGPGSPNWHKSNALKTMRKRPELEGQLLAKGGWDYQLVDELKPQPGDIVVPKIRYSGFFNSSFDSVLRSRGIRNLVFTGIATNVCVESTLRDGFHLEYFGVVLADATHQAGPDFAQQAALFNIETFFGWISSVDDFCTTFSPVGQPS.

The active-site Proton acceptor is Asp41. Lys150 is a catalytic residue. Cys183 serves as the catalytic Nucleophile.

The protein belongs to the isochorismatase family. RutB subfamily.

The enzyme catalyses (Z)-3-ureidoacrylate + H2O + H(+) = (Z)-3-aminoacrylate + NH4(+) + CO2. It carries out the reaction (Z)-3-ureidoacrylate + H2O = (Z)-3-aminoacrylate + carbamate + H(+). The catalysed reaction is (Z)-2-methylureidoacrylate + H2O + H(+) = (Z)-2-methylaminoacrylate + NH4(+) + CO2. In terms of biological role, hydrolyzes ureidoacrylate to form aminoacrylate and carbamate. The carbamate hydrolyzes spontaneously, thereby releasing one of the nitrogen atoms of the pyrimidine ring as ammonia and one of its carbon atoms as CO2. The polypeptide is Ureidoacrylate amidohydrolase RutB (Pseudomonas savastanoi pv. phaseolicola (strain 1448A / Race 6) (Pseudomonas syringae pv. phaseolicola (strain 1448A / Race 6))).